The following is a 180-amino-acid chain: Ribosome rescue factor SmrB (180 aa).

Residues 98 to 173 (LDLHGLTQLQ…GNAALLVLVA (76 aa)) enclose the Smr domain.

This sequence belongs to the SmrB family. As to quaternary structure, associates with collided ribosomes, but not with correctly translating polysomes.

In terms of biological role, acts as a ribosome collision sensor. Detects stalled/collided disomes (pairs of ribosomes where the leading ribosome is stalled and a second ribosome has collided with it) and endonucleolytically cleaves mRNA at the 5' boundary of the stalled ribosome. Stalled/collided disomes form a new interface (primarily via the 30S subunits) that binds SmrB. Cleaved mRNA becomes available for tmRNA ligation, leading to ribosomal subunit dissociation and rescue of stalled ribosomes. The sequence is that of Ribosome rescue factor SmrB from Pectobacterium carotovorum subsp. carotovorum (strain PC1).